A 323-amino-acid chain; its full sequence is DNA-directed RNA polymerase subunit alpha (323 aa).

The segment at 1–225 (MLDIAMPKIE…QYSQTIADFN (225 aa)) is alpha N-terminal domain (alpha-NTD). The segment at 246 to 323 (IYDTPIEELD…SHAARAEIEG (78 aa)) is alpha C-terminal domain (alpha-CTD).

Belongs to the RNA polymerase alpha chain family. Homodimer. The RNAP catalytic core consists of 2 alpha, 1 beta, 1 beta' and 1 omega subunit. When a sigma factor is associated with the core the holoenzyme is formed, which can initiate transcription.

It carries out the reaction RNA(n) + a ribonucleoside 5'-triphosphate = RNA(n+1) + diphosphate. Functionally, DNA-dependent RNA polymerase catalyzes the transcription of DNA into RNA using the four ribonucleoside triphosphates as substrates. The sequence is that of DNA-directed RNA polymerase subunit alpha from Roseiflexus sp. (strain RS-1).